A 126-amino-acid chain; its full sequence is Aspartate 1-decarboxylase (126 aa).

The active-site Schiff-base intermediate with substrate; via pyruvic acid is serine 25. Serine 25 carries the pyruvic acid (Ser) modification. Threonine 57 serves as a coordination point for substrate. Residue tyrosine 58 is the Proton donor of the active site. 73 to 75 lines the substrate pocket; the sequence is GAA.

Belongs to the PanD family. In terms of assembly, heterooctamer of four alpha and four beta subunits. The cofactor is pyruvate. In terms of processing, is synthesized initially as an inactive proenzyme, which is activated by self-cleavage at a specific serine bond to produce a beta-subunit with a hydroxyl group at its C-terminus and an alpha-subunit with a pyruvoyl group at its N-terminus.

It localises to the cytoplasm. It catalyses the reaction L-aspartate + H(+) = beta-alanine + CO2. The protein operates within cofactor biosynthesis; (R)-pantothenate biosynthesis; beta-alanine from L-aspartate: step 1/1. Its function is as follows. Catalyzes the pyruvoyl-dependent decarboxylation of aspartate to produce beta-alanine. The chain is Aspartate 1-decarboxylase from Psychrobacter sp. (strain PRwf-1).